A 302-amino-acid chain; its full sequence is Lysosomal thioesterase PPT2 (302 aa).

A signal peptide spans 1–27; that stretch reads MPGLWRQRLPSAWALLLLPFLPLLLPA. Asn60 carries an N-linked (GlcNAc...) asparagine glycan. Cystine bridges form between Cys109/Cys117 and Cys165/Cys176. Ser111 serves as the catalytic Nucleophile. Residues Asn190 and Asn206 are each glycosylated (N-linked (GlcNAc...) asparagine). Asp228 is a catalytic residue. Asn245 carries N-linked (GlcNAc...) asparagine glycosylation. A disulfide bond links Cys276 and Cys296. Residue His283 is part of the active site. Asn289 is a glycosylation site (N-linked (GlcNAc...) asparagine).

The protein belongs to the palmitoyl-protein thioesterase family.

It localises to the lysosome. It catalyses the reaction hexadecanoyl-CoA + H2O = hexadecanoate + CoA + H(+). It carries out the reaction S-hexadecanoyl-N-acetylcysteamine + H2O = N-acetylcysteamine + hexadecanoate + H(+). Functionally, catalyzes the cleavage of thioester bonds from S-palmitoyl-CoA or S-palmitoyl-N-acetylcysteamine (unbranched structures) but does not have activity against palmitoylcysteine or palmitoylated proteins, branched structures or bulky head groups. Conversely, hydrolyzes both long and short chain fatty acyl-CoA substrate. The protein is Lysosomal thioesterase PPT2 (Ppt2) of Rattus norvegicus (Rat).